The sequence spans 700 residues: MTAPFRLHAPFAPAGDQPRAITELSSGLHRGDRIQTLLGVTGSGKTMTMANVIADWGRPTLVLSHNKTLAAQLYGELKSFFPNNAVEYFISYYDYYQPEAYVPSSDTYIEKDASINEDIDRLRLRATSSLMERDDVVIVSTVSAIYGLGDPVQYRERMVALSRGQQIARDDILRALVGIQYLRNDVAFERGTFRVRGDTVEILPAYEEQAVRIELWGDEIERISKIDPVTGETIAALERMAIYPAKHFITNRPTIERASMAIRDELATRLAELRMAGKLLEAQRLEQRTQFDLEMLMEIGTCAGIENYSRHISGREAGERPACLLDYFPDDYLVVVDESHVTLPQIRAMYNGDRARKLTLVDYGFRLPSALDNRPLVFDEFMSLVPRLVNVSATPGELELQLSEGVVVEQVIRPTGLLDPVLEVRPVKGQVDDLLHEIRARERRGERVLVTTLTKRMSEDLTDYLQQMGVRVRYMHSDIDAIERMEIVRGLRLGEFDVLVGINLLREGLDMPEVSLVAILDADQEGFLRSDRSLIQTIGRAARNLHGMAILYGDRITGSMQRAIDETTRRRTIQREHNEAHGIVPRGVTKSVDEVRFITRVADARVEREGEAPAPRRLASESAPRSREELETLVGELEIAMREAAVALDFEAAARLRDQLFEVRTALGQAPSEARGNAQAPKRPPGSAPQRRAGGGRRGR.

The 158-residue stretch at 26–183 (SGLHRGDRIQ…RALVGIQYLR (158 aa)) folds into the Helicase ATP-binding domain. 39 to 46 (GVTGSGKT) is a binding site for ATP. A Beta-hairpin motif is present at residues 92–115 (YYDYYQPEAYVPSSDTYIEKDASI). The Helicase C-terminal domain maps to 430–596 (QVDDLLHEIR…GVTKSVDEVR (167 aa)). The disordered stretch occupies residues 608–627 (REGEAPAPRRLASESAPRSR). In terms of domain architecture, UVR spans 631 to 666 (ETLVGELEIAMREAAVALDFEAAARLRDQLFEVRTA). Positions 667–700 (LGQAPSEARGNAQAPKRPPGSAPQRRAGGGRRGR) are disordered.

It belongs to the UvrB family. Forms a heterotetramer with UvrA during the search for lesions. Interacts with UvrC in an incision complex.

It is found in the cytoplasm. Functionally, the UvrABC repair system catalyzes the recognition and processing of DNA lesions. A damage recognition complex composed of 2 UvrA and 2 UvrB subunits scans DNA for abnormalities. Upon binding of the UvrA(2)B(2) complex to a putative damaged site, the DNA wraps around one UvrB monomer. DNA wrap is dependent on ATP binding by UvrB and probably causes local melting of the DNA helix, facilitating insertion of UvrB beta-hairpin between the DNA strands. Then UvrB probes one DNA strand for the presence of a lesion. If a lesion is found the UvrA subunits dissociate and the UvrB-DNA preincision complex is formed. This complex is subsequently bound by UvrC and the second UvrB is released. If no lesion is found, the DNA wraps around the other UvrB subunit that will check the other stand for damage. The sequence is that of UvrABC system protein B from Gemmatimonas aurantiaca (strain DSM 14586 / JCM 11422 / NBRC 100505 / T-27).